We begin with the raw amino-acid sequence, 370 residues long: Dihydrolipoyllysine-residue acetyltransferase component of acetoin cleaving system (370 aa).

A Lipoyl-binding domain is found at 4–79; that stretch reads IHTLTMPKWG…PVGALLAVVV (76 aa). Lys-45 bears the N6-lipoyllysine mark. Residues 135-355 form the AB hydrolase-1 domain; it reads PLVLVHGFGG…EAGHMVQMEA (221 aa).

(R)-lipoate serves as cofactor.

The enzyme catalyses N(6)-[(R)-dihydrolipoyl]-L-lysyl-[protein] + acetyl-CoA = N(6)-[(R)-S(8)-acetyldihydrolipoyl]-L-lysyl-[protein] + CoA. The protein operates within ketone degradation; acetoin degradation. The protein is Dihydrolipoyllysine-residue acetyltransferase component of acetoin cleaving system (acoC) of Pseudomonas putida (Arthrobacter siderocapsulatus).